The sequence spans 159 residues: Insulin-like peptide 7 (159 aa).

An N-terminal signal peptide occupies residues 1–31 (MTRMIIQNSGSWTLCGAVLLFVLPLIPTPEA). Disulfide bonds link C63–C136, C75–C150, and C135–C141. Positions 90–121 (TGNDEAWIKKTTTEPDGSTWLHVNYANMFLRS) are cleaved as a propeptide — connecting peptide.

This sequence belongs to the insulin family. Heterodimer of a B chain and an A chain linked by two disulfide bonds. As to expression, broadly expressed at a low level throughout the embryo, except the yolk. Expressed at a moderate level in the embryonic midgut. Larval expression is restricted to ten cells of the ventral nerve cord - in four pairs of centrally located cells in the most posterior abdominal segments and in one pair of dorsally located cells in the A1 or A2 segments.

It localises to the secreted. Functionally, possible ligand of InR/insulin-like receptor. In Drosophila melanogaster (Fruit fly), this protein is Insulin-like peptide 7.